A 471-amino-acid polypeptide reads, in one-letter code: 3-isopropylmalate dehydratase large subunit (471 aa).

The [4Fe-4S] cluster site is built by Cys-347, Cys-407, and Cys-410.

Belongs to the aconitase/IPM isomerase family. LeuC type 1 subfamily. In terms of assembly, heterodimer of LeuC and LeuD. [4Fe-4S] cluster is required as a cofactor.

The catalysed reaction is (2R,3S)-3-isopropylmalate = (2S)-2-isopropylmalate. It participates in amino-acid biosynthesis; L-leucine biosynthesis; L-leucine from 3-methyl-2-oxobutanoate: step 2/4. Catalyzes the isomerization between 2-isopropylmalate and 3-isopropylmalate, via the formation of 2-isopropylmaleate. This is 3-isopropylmalate dehydratase large subunit from Anoxybacillus flavithermus (strain DSM 21510 / WK1).